The following is a 104-amino-acid chain: Chitin-binding protein 2 (104 aa).

As to quaternary structure, oligomer in an unreduced state. In terms of processing, glycosylated.

In terms of biological role, chitin-binding protein. Has antifungal activity against C.krusei, C.albicans, C.tropicalis and C.parapsilosis. Inhibits C.albicans by increasing cell membrane permeability and production of reactive oxygen species. Has no hemagglutinating activity. This Moringa oleifera (Horseradish tree) protein is Chitin-binding protein 2.